We begin with the raw amino-acid sequence, 451 residues long: MLNVTDLRGHTPSKSDIRRALPRGGTDVVSVLPIVEPVVDDVQNRGAEAALDYGEKFDHIRPASVRVPAEVLKAAEDTLDPRVREAIEESIRRVRKVHADQKPREHTTELAPGGTVTERFLPIDRVGLYVPGGNAVYPSSVIMNAVPAQEAGVGTLVVASPPQADHGGWPHPTILAACSILGVDEVWAVGGAQAVALLAFGDDSADLEPVDIITGPGNIFVTAAKRLVRGVVGTDSEAGPTEIAILADDTANPVNVAYDLISQAEHDVMAASVLITDSEQLARDVNREIEARYAITRNADRVAEALRGKQSGIVLVDDIEVGIAVADQYAAEHLEVHTANAREVSERISNAGAIFVGDFSPVPLGDYSAGSNHVLPTSGTARFSAGLSTHTFLRPVNLIEYDEAALKDISEVVINFADAEDLPAHGEAIRARFETLPTTTADTTDTPDATA.

A disordered region spans residues 1 to 20; sequence MLNVTDLRGHTPSKSDIRRA. The span at 7 to 19 shows a compositional bias: basic and acidic residues; that stretch reads LRGHTPSKSDIRR. Positions 129, 193, and 218 each coordinate NAD(+). Substrate contacts are provided by Thr241, Gln263, and His266. Residues Gln263 and His266 each contribute to the Zn(2+) site. Residues Glu332 and His333 each act as proton acceptor in the active site. Substrate contacts are provided by His333, Asp366, Glu420, and His425. Asp366 lines the Zn(2+) pocket. His425 contacts Zn(2+).

This sequence belongs to the histidinol dehydrogenase family. Zn(2+) serves as cofactor.

It carries out the reaction L-histidinol + 2 NAD(+) + H2O = L-histidine + 2 NADH + 3 H(+). The protein operates within amino-acid biosynthesis; L-histidine biosynthesis; L-histidine from 5-phospho-alpha-D-ribose 1-diphosphate: step 9/9. Its function is as follows. Catalyzes the sequential NAD-dependent oxidations of L-histidinol to L-histidinaldehyde and then to L-histidine. This Corynebacterium efficiens (strain DSM 44549 / YS-314 / AJ 12310 / JCM 11189 / NBRC 100395) protein is Histidinol dehydrogenase.